Consider the following 599-residue polypeptide: 2-succinyl-5-enolpyruvyl-6-hydroxy-3-cyclohexene-1-carboxylate synthase (599 aa).

The segment covering 1–21 (MTSENPLDPNNAYAAADDAPL) has biased composition (low complexity). A disordered region spans residues 1-35 (MTSENPLDPNNAYAAADDAPLSEGDPTGAPADSGS).

It belongs to the TPP enzyme family. MenD subfamily. Homodimer. Mg(2+) is required as a cofactor. It depends on Mn(2+) as a cofactor. Thiamine diphosphate serves as cofactor.

It catalyses the reaction isochorismate + 2-oxoglutarate + H(+) = 5-enolpyruvoyl-6-hydroxy-2-succinyl-cyclohex-3-ene-1-carboxylate + CO2. The protein operates within quinol/quinone metabolism; 1,4-dihydroxy-2-naphthoate biosynthesis; 1,4-dihydroxy-2-naphthoate from chorismate: step 2/7. It functions in the pathway quinol/quinone metabolism; menaquinone biosynthesis. Functionally, catalyzes the thiamine diphosphate-dependent decarboxylation of 2-oxoglutarate and the subsequent addition of the resulting succinic semialdehyde-thiamine pyrophosphate anion to isochorismate to yield 2-succinyl-5-enolpyruvyl-6-hydroxy-3-cyclohexene-1-carboxylate (SEPHCHC). This Arthrobacter sp. (strain FB24) protein is 2-succinyl-5-enolpyruvyl-6-hydroxy-3-cyclohexene-1-carboxylate synthase.